Here is a 382-residue protein sequence, read N- to C-terminus: Probable G-protein coupled receptor 132 (382 aa).

Topologically, residues 1–42 are extracellular; the sequence is MRSEPTNAAGNTTLGVTSVLQSTSVPSSETCHVSYEESRVVL. The N-linked (GlcNAc...) asparagine glycan is linked to N11. A helical membrane pass occupies residues 43–65; that stretch reads VVVYSAVCLLGLPANCLTAWLTL. The Cytoplasmic segment spans residues 66–76; it reads LQVLQRNVLAV. A helical membrane pass occupies residues 77 to 99; sequence YLFCLSLCELLYISTVPLWIIYI. At 100–113 the chain is on the extracellular side; that stretch reads QNQHKWNLGPQACK. C112 and C184 form a disulfide bridge. A helical transmembrane segment spans residues 114 to 135; it reads VTAYIFFCNIYISILLLCCISC. Residues 136–155 are Cytoplasmic-facing; that stretch reads DRYMAVVYALESRGHRHQRT. Residues 156-175 form a helical membrane-spanning segment; it reads AVTISACVILLVGLVNYPVF. Residues 176–198 are Extracellular-facing; that stretch reads DMKVEKSFCFEPLRMNSKIAGYH. A helical transmembrane segment spans residues 199–221; the sequence is YLRFTFGFAIPLGILAFTNHQIF. Over 222-241 the chain is Cytoplasmic; that stretch reads RSIKLSDSLSAAQKNKVKRS. The helical transmembrane segment at 242 to 261 threads the bilayer; the sequence is AIAVVTIFLVCFAPYHVVLL. Over 262 to 286 the chain is Extracellular; the sequence is VKAASFSFYQGDMDAVCAFESRLYT. A helical membrane pass occupies residues 287–309; the sequence is VSMVFLCLSTVNSVADPIIYVLG. Topologically, residues 310–382 are cytoplasmic; that stretch reads TDHSRQEVSR…SPERLPEELC (73 aa).

The protein belongs to the G-protein coupled receptor 1 family. As to expression, highly expressed in hematopoietic tissues rich in lymphocytes like spleen and thymus. Weakly expressed in heart and lung. Highly expressed in infiltrating macrophages within atherosclerotic lesions.

The protein localises to the cell membrane. In terms of biological role, may be a receptor for oxidized free fatty acids derived from linoleic and arachidonic acids such as 9-hydroxyoctadecadienoic acid (9-HODE). Activates a G alpha protein, most likely G alpha(q). May be involved in apoptosis. Functions at the G2/M checkpoint to delay mitosis. May function as a sensor that monitors the oxidative states and mediates appropriate cellular responses such as secretion of paracrine signals and attenuation of proliferation. May mediate ths accumulation of intracellular inositol phosphates at acidic pH through proton-sensing activity. The sequence is that of Probable G-protein coupled receptor 132 (Gpr132) from Mus musculus (Mouse).